A 144-amino-acid polypeptide reads, in one-letter code: D-aminoacyl-tRNA deacylase (144 aa).

The short motif at 136 to 137 (GP) is the Gly-cisPro motif, important for rejection of L-amino acids element.

It belongs to the DTD family. Homodimer.

It is found in the cytoplasm. It catalyses the reaction glycyl-tRNA(Ala) + H2O = tRNA(Ala) + glycine + H(+). The catalysed reaction is a D-aminoacyl-tRNA + H2O = a tRNA + a D-alpha-amino acid + H(+). Its function is as follows. An aminoacyl-tRNA editing enzyme that deacylates mischarged D-aminoacyl-tRNAs. Also deacylates mischarged glycyl-tRNA(Ala), protecting cells against glycine mischarging by AlaRS. Acts via tRNA-based rather than protein-based catalysis; rejects L-amino acids rather than detecting D-amino acids in the active site. By recycling D-aminoacyl-tRNA to D-amino acids and free tRNA molecules, this enzyme counteracts the toxicity associated with the formation of D-aminoacyl-tRNA entities in vivo and helps enforce protein L-homochirality. The chain is D-aminoacyl-tRNA deacylase from Mannheimia succiniciproducens (strain KCTC 0769BP / MBEL55E).